Here is a 431-residue protein sequence, read N- to C-terminus: Forkhead box protein P3 (431 aa).

Positions 1–68 (MPNPRPGKPS…SSLNPMPPSQ (68 aa)) are disordered. Low complexity predominate over residues 10-25 (SAPSLALGPSPGASPS). Serine 19 carries the post-translational modification Phosphoserine; by CDK2. At lysine 31 the chain carries N6-acetyllysine. A Nuclear export signal motif is present at residues 68–76 (QLQLPTLPL). The LXXLL motif signature appears at 92-96 (LQALL). Residues 106-190 (LSTVDAHART…STLSAMPQSS (85 aa)) are essential for transcriptional repressor activity and for interaction with KAT5 and HDAC7. The interval 149–199 (LPPGINVASLEWVSREPALLCTFPNPGAPRKDSTLSAMPQSSYPLLANGVC) is interaction with IKZF4. Residues 197 to 222 (GVCKWPGCEKVFEEPEDFLKHCQADH) form a C2H2-type zinc finger. The short motif at 239–248 (VQSLEQQLVL) is the Nuclear export signal element. The interval 239–260 (VQSLEQQLVLEKEKLSAMQAHL) is leucine-zipper. Residues lysine 250 and lysine 252 each participate in a glycyl lysine isopeptide (Lys-Gly) (interchain with G-Cter in ubiquitin) cross-link. N6-acetyllysine; alternate is present on residues lysine 263 and lysine 268. Glycyl lysine isopeptide (Lys-Gly) (interchain with G-Cter in ubiquitin); alternate cross-links involve residues lysine 263 and lysine 268. An interaction with RUNX1 region spans residues 278–336 (GSCCIVAAGSQGSAVPAWSGPREAPDSLFAVRRHLWGSHGNSTFPEFLHNMDYFKFHNM). The fork-head DNA-binding region spans 337-423 (RPPFTYATLI…RKKRSQRPSR (87 aa)). Residue lysine 393 forms a Glycyl lysine isopeptide (Lys-Gly) (interchain with G-Cter in ubiquitin) linkage. The Nuclear localization signal signature appears at 414-417 (RKKR). Serine 418 carries the post-translational modification Phosphoserine. Positions 418 to 431 (SQRPSRCSNPTPGP) are excised as a propeptide.

As to quaternary structure, homodimer. Dimerization is essential for its transcriptional regulator activity. Interacts with IKZF3. Interacts (via LXXLL motif) with RORA (via AF-2 motif). Interacts with HDAC9 in the absence of T-cell stimulation. Interacts with PPP1CA, PPP1CB, PPP1CG, KAT5, HDAC7, HSPA8, USP7, STUB1, HSPA1A/B, RUNX1, RUNX2, RUNX3, RELA, NFATC2, IKFZ4 and RORC. Post-translationally, phosphorylation at Ser-418 regulates its transcriptional repressor activity and consequently, regulatory T-cells (Treg) suppressive function. Phosphorylation by CDK2 negatively regulates its transcriptional activity and protein stability. In terms of processing, polyubiquitinated, leading to its proteasomal degradation in regulatory T-cells (Treg) which is mediated by STUB1 in a HSPA1A/B-dependent manner. Deubiquitinated by USP7 and USP44 leading to increase in protein stability. Acetylation on lysine residues stabilizes FOXP3 and promotes differentiation of T-cells into induced regulatory T-cells (iTregs) associated with suppressive functions. Acetylation is mediated by a coordinated action of KAT5 and EP300/p300 acetyltransferases: EP300/p300 is required to enhance KAT5 autoacetylation, promoting acetylation of FOXP3 by KAT5. Deacetylated by SIRT1. Post-translationally, undergoes proteolytic cleavage in activated regulatory T-cells (Treg), and can be cleaved at either the N- or C-terminal site, or at both sites.

Its subcellular location is the nucleus. It localises to the cytoplasm. Transcriptional regulator which is crucial for the development and inhibitory function of regulatory T-cells (Treg). Plays an essential role in maintaining homeostasis of the immune system by allowing the acquisition of full suppressive function and stability of the Treg lineage, and by directly modulating the expansion and function of conventional T-cells. Can act either as a transcriptional repressor or a transcriptional activator depending on its interactions with other transcription factors, histone acetylases and deacetylases. The suppressive activity of Treg involves the coordinate activation of many genes, including CTLA4 and TNFRSF18 by FOXP3 along with repression of genes encoding cytokines such as interleukin-2 (IL2) and interferon-gamma (IFNG). Inhibits cytokine production and T-cell effector function by repressing the activity of two key transcription factors, RELA and NFATC2. Mediates transcriptional repression of IL2 via its association with histone acetylase KAT5 and histone deacetylase HDAC7. Can activate the expression of TNFRSF18, IL2RA and CTLA4 and repress the expression of IL2 and IFNG via its association with transcription factor RUNX1. Inhibits the differentiation of IL17 producing helper T-cells (Th17) by antagonizing RORC function, leading to down-regulation of IL17 expression, favoring Treg development. Inhibits the transcriptional activator activity of RORA. Can repress the expression of IL2 and IFNG via its association with transcription factor IKZF4. This Macaca fascicularis (Crab-eating macaque) protein is Forkhead box protein P3 (FOXP3).